The chain runs to 290 residues: MNVIRARTAGFCMGVSLALRKLDREVDRAEEKAAQGSPRCRIATFGPIIHNPQVLEAYAGMGVRCLRQVDEVEAGDHVVIRAHGVPQQQEKALRSRDAVVVDATCPKVKKAQLGIEEQCRAGRTLLLFGEAEHPEVRGLLSYAGEGALVFGSVDELEGLPLQPETEYFLAAQTTQDRVAFEAARAWLHERLGHEVPVLETICDATRLRQQEAIDIARKVDAMVVVGGFDSGNTRRLADVAAAQGVFTVHVENESQLPVEQLRGCGIIGLTAGASTPKSIIDATQRFLESL.

Cys-12 contacts [4Fe-4S] cluster. (2E)-4-hydroxy-3-methylbut-2-enyl diphosphate-binding residues include His-50 and His-83. Residues His-50 and His-83 each coordinate dimethylallyl diphosphate. 2 residues coordinate isopentenyl diphosphate: His-50 and His-83. Position 105 (Cys-105) interacts with [4Fe-4S] cluster. His-133 is a binding site for (2E)-4-hydroxy-3-methylbut-2-enyl diphosphate. His-133 contacts dimethylallyl diphosphate. His-133 lines the isopentenyl diphosphate pocket. Glu-135 (proton donor) is an active-site residue. Thr-173 provides a ligand contact to (2E)-4-hydroxy-3-methylbut-2-enyl diphosphate. Cys-202 is a [4Fe-4S] cluster binding site. Ser-230, Asn-232, and Ser-274 together coordinate (2E)-4-hydroxy-3-methylbut-2-enyl diphosphate. 3 residues coordinate dimethylallyl diphosphate: Ser-230, Asn-232, and Ser-274. Isopentenyl diphosphate-binding residues include Ser-230, Asn-232, and Ser-274.

The protein belongs to the IspH family. It depends on [4Fe-4S] cluster as a cofactor.

The enzyme catalyses isopentenyl diphosphate + 2 oxidized [2Fe-2S]-[ferredoxin] + H2O = (2E)-4-hydroxy-3-methylbut-2-enyl diphosphate + 2 reduced [2Fe-2S]-[ferredoxin] + 2 H(+). The catalysed reaction is dimethylallyl diphosphate + 2 oxidized [2Fe-2S]-[ferredoxin] + H2O = (2E)-4-hydroxy-3-methylbut-2-enyl diphosphate + 2 reduced [2Fe-2S]-[ferredoxin] + 2 H(+). Its pathway is isoprenoid biosynthesis; dimethylallyl diphosphate biosynthesis; dimethylallyl diphosphate from (2E)-4-hydroxy-3-methylbutenyl diphosphate: step 1/1. The protein operates within isoprenoid biosynthesis; isopentenyl diphosphate biosynthesis via DXP pathway; isopentenyl diphosphate from 1-deoxy-D-xylulose 5-phosphate: step 6/6. In terms of biological role, catalyzes the conversion of 1-hydroxy-2-methyl-2-(E)-butenyl 4-diphosphate (HMBPP) into a mixture of isopentenyl diphosphate (IPP) and dimethylallyl diphosphate (DMAPP). Acts in the terminal step of the DOXP/MEP pathway for isoprenoid precursor biosynthesis. This is 4-hydroxy-3-methylbut-2-enyl diphosphate reductase from Nitratidesulfovibrio vulgaris (strain DP4) (Desulfovibrio vulgaris).